Reading from the N-terminus, the 399-residue chain is NADH-quinone oxidoreductase subunit D 2 (399 aa).

The disordered stretch occupies residues 1–20 (MIASKESNSAATPATSAPTL). The segment covering 9 to 20 (SAATPATSAPTL) has biased composition (low complexity).

The protein belongs to the complex I 49 kDa subunit family. As to quaternary structure, NDH-1 is composed of 14 different subunits. Subunits NuoB, C, D, E, F, and G constitute the peripheral sector of the complex.

The protein resides in the cell inner membrane. It catalyses the reaction a quinone + NADH + 5 H(+)(in) = a quinol + NAD(+) + 4 H(+)(out). NDH-1 shuttles electrons from NADH, via FMN and iron-sulfur (Fe-S) centers, to quinones in the respiratory chain. The immediate electron acceptor for the enzyme in this species is believed to be ubiquinone. Couples the redox reaction to proton translocation (for every two electrons transferred, four hydrogen ions are translocated across the cytoplasmic membrane), and thus conserves the redox energy in a proton gradient. The protein is NADH-quinone oxidoreductase subunit D 2 of Opitutus terrae (strain DSM 11246 / JCM 15787 / PB90-1).